We begin with the raw amino-acid sequence, 393 residues long: Putative amino-acid ABC transporter permease protein YhdX (393 aa).

Transmembrane regions (helical) follow at residues 21 to 41 (AWLFQILAVVAVVGIVGWLFH), 92 to 112 (LLVSALCIVFASVLGFFIGLA), 128 to 148 (IEIFRNIPPLLQIFFWYFAVL), 180 to 200 (DGFIAFILAVVMAIVLSVGLF), 219 to 239 (IAAVLIIGLPLLAQWLFGAAL), 256 to 276 (VLIPELAALTLALSVYTSAFI), 333 to 353 (SSLAAAIGYPDMVSLFAGTVL), and 363 to 383 (IAMTMSVYLIISLTISLLMNI). One can recognise an ABC transmembrane type-1 domain in the interval 88-381 (LLNTLLVSAL…IISLTISLLM (294 aa)).

It belongs to the binding-protein-dependent transport system permease family. HisMQ subfamily.

It is found in the cell inner membrane. Probably part of the binding-protein-dependent transport system YdhWXYZ for an amino acid; probably responsible for the translocation of the substrate across the membrane. In Escherichia coli (strain K12), this protein is Putative amino-acid ABC transporter permease protein YhdX (yhdX).